The following is a 160-amino-acid chain: Ribosome maturation factor RimP (160 aa).

Belongs to the RimP family.

Its subcellular location is the cytoplasm. Required for maturation of 30S ribosomal subunits. The polypeptide is Ribosome maturation factor RimP (Cronobacter sakazakii (strain ATCC BAA-894) (Enterobacter sakazakii)).